Consider the following 521-residue polypeptide: Probable ATP-dependent RNA helicase Dbp45A (521 aa).

A Q motif motif is present at residues 7–35 (NPFQILGLRPWLVKQLTKLGLKGATPIQQ). Residues 38–209 (IPAILAGQDC…IFPIASDCFE (172 aa)) enclose the Helicase ATP-binding domain. Position 51–58 (51–58 (AKTGSGKT)) interacts with ATP. The short motif at 157 to 160 (DEAD) is the DEAD box element. Residues 237 to 386 (VLIEALRKYR…EHPIDQRMVE (150 aa)) form the Helicase C-terminal domain. The disordered stretch occupies residues 448 to 521 (KRKLQHAEPA…GRADVKKDKA (74 aa)). Basic and acidic residues-rich tracts occupy residues 460-482 (EEGK…FEKK) and 502-521 (LNKE…KDKA).

It belongs to the DEAD box helicase family. DDX49/DBP8 subfamily.

It catalyses the reaction ATP + H2O = ADP + phosphate + H(+). Its function is as follows. Probable ATP-binding RNA helicase. The protein is Probable ATP-dependent RNA helicase Dbp45A (Dbp45A) of Drosophila melanogaster (Fruit fly).